Consider the following 117-residue polypeptide: uncharacterized protein (117 aa).

The helical transmembrane segment at 76-96 (FIMSSGCFLIASLSCVGLTVF) threads the bilayer.

Its subcellular location is the membrane. This is an uncharacterized protein from Saccharomyces cerevisiae (strain ATCC 204508 / S288c) (Baker's yeast).